The primary structure comprises 166 residues: Interferon gamma (166 aa).

A signal peptide spans 1 to 23; sequence MKYTSYFLALLLCVLLGFSGSYG. At Gln24 the chain carries Pyrrolidone carboxylic acid. 2 N-linked (GlcNAc...) asparagine glycosylation sites follow: Asn39 and Asn106.

Belongs to the type II (or gamma) interferon family. Homodimer. Interacts with IFNGR1 (via extracellular domain); this interaction promotes IFNGR1 dimerization. Released primarily from activated T lymphocytes.

Its subcellular location is the secreted. Type II interferon produced by immune cells such as T-cells and NK cells that plays crucial roles in antimicrobial, antiviral, and antitumor responses by activating effector immune cells and enhancing antigen presentation. Primarily signals through the JAK-STAT pathway after interaction with its receptor IFNGR1 to affect gene regulation. Upon IFNG binding, IFNGR1 intracellular domain opens out to allow association of downstream signaling components JAK2, JAK1 and STAT1, leading to STAT1 activation, nuclear translocation and transcription of IFNG-regulated genes. Many of the induced genes are transcription factors such as IRF1 that are able to further drive regulation of a next wave of transcription. Plays a role in class I antigen presentation pathway by inducing a replacement of catalytic proteasome subunits with immunoproteasome subunits. In turn, increases the quantity, quality, and repertoire of peptides for class I MHC loading. Increases the efficiency of peptide generation also by inducing the expression of activator PA28 that associates with the proteasome and alters its proteolytic cleavage preference. Up-regulates as well MHC II complexes on the cell surface by promoting expression of several key molecules such as cathepsins B/CTSB, H/CTSH, and L/CTSL. Participates in the regulation of hematopoietic stem cells during development and under homeostatic conditions by affecting their development, quiescence, and differentiation. The polypeptide is Interferon gamma (IFNG) (Bubalus bubalis (Domestic water buffalo)).